The chain runs to 185 residues: Elongation factor P (185 aa).

The protein belongs to the elongation factor P family.

Its subcellular location is the cytoplasm. Its pathway is protein biosynthesis; polypeptide chain elongation. Involved in peptide bond synthesis. Stimulates efficient translation and peptide-bond synthesis on native or reconstituted 70S ribosomes in vitro. Probably functions indirectly by altering the affinity of the ribosome for aminoacyl-tRNA, thus increasing their reactivity as acceptors for peptidyl transferase. In Desulfitobacterium hafniense (strain Y51), this protein is Elongation factor P.